The chain runs to 250 residues: LOB domain-containing protein 37 (250 aa).

The LOB domain maps to 1 to 107; sequence MSCNGCRVLR…VETVLRGGSL (107 aa). A disordered region spans residues 145–227; the sequence is DSTDRNIYHH…DSGTTTTTTA (83 aa). Residues 157-170 show a composition bias toward low complexity; sequence FSSSRSRSTMDSSS.

Belongs to the LOB domain-containing protein family. As to expression, expressed in young shoots, roots, stems, leaves and flowers.

In Arabidopsis thaliana (Mouse-ear cress), this protein is LOB domain-containing protein 37 (LBD37).